The following is a 151-amino-acid chain: Regulatory protein RecX (151 aa).

This sequence belongs to the RecX family.

It is found in the cytoplasm. Modulates RecA activity. The sequence is that of Regulatory protein RecX from Haemophilus ducreyi (strain 35000HP / ATCC 700724).